A 515-amino-acid chain; its full sequence is Cytidine and dCMP deaminase domain-containing protein 1 (515 aa).

2 stretches are compositionally biased toward polar residues: residues 1–11 (MKEAGQMQNLE) and 18–27 (SVSTQTGSMT). Disordered stretches follow at residues 1–27 (MKEAGQMQNLESARAGRSVSTQTGSMT) and 56–83 (RQKSQKNEEGKHGPLGDNEEMTRVSTDK). Positions 60–83 (QKNEEGKHGPLGDNEEMTRVSTDK) are enriched in basic and acidic residues. Residues 71–169 (GDNEEMTRVS…SLLTEASSSE (99 aa)) form the CMP/dCMP-type deaminase 1 domain. 3 residues coordinate Zn(2+): histidine 110, cysteine 135, and cysteine 138. Positions 272-284 (NLRQNMKDLILLL) match the Nuclear export signal motif. The CMP/dCMP-type deaminase 2 domain occupies 318–483 (EIARHCMVQA…LNPSEAYGLE (166 aa)). Histidine 399 serves as a coordination point for Zn(2+). The Proton donor role is filled by glutamate 401. 2 residues coordinate Zn(2+): cysteine 427 and cysteine 430. Residues 481 to 515 (GLEQNEPERRENGVLRPVPQKEEQHQDKKLRLGIH) form a disordered region. Over residues 486–515 (EPERRENGVLRPVPQKEEQHQDKKLRLGIH) the composition is skewed to basic and acidic residues. Positions 489–511 (RRENGVLRPVPQKEEQHQDKKLR) match the Bipartite nuclear localization signal motif.

The protein belongs to the cytidine and deoxycytidylate deaminase family. Zn(2+) serves as cofactor.

It is found in the cytoplasm. The protein localises to the nucleus. The catalysed reaction is 2'-deoxycytidine + H2O + H(+) = 2'-deoxyuridine + NH4(+). It carries out the reaction cytidine + H2O + H(+) = uridine + NH4(+). Catalyzes the deamination of cytidine and deoxycytidine into uridine and deoxyuridine, respectively. May play an important role in testicular development and spermatogenesis. The sequence is that of Cytidine and dCMP deaminase domain-containing protein 1 (CDADC1) from Macaca fascicularis (Crab-eating macaque).